Consider the following 245-residue polypeptide: 1-(5-phosphoribosyl)-5-[(5-phosphoribosylamino)methylideneamino] imidazole-4-carboxamide isomerase (245 aa).

The Proton acceptor role is filled by aspartate 11. Aspartate 132 (proton donor) is an active-site residue.

It belongs to the HisA/HisF family.

The protein localises to the cytoplasm. The enzyme catalyses 1-(5-phospho-beta-D-ribosyl)-5-[(5-phospho-beta-D-ribosylamino)methylideneamino]imidazole-4-carboxamide = 5-[(5-phospho-1-deoxy-D-ribulos-1-ylimino)methylamino]-1-(5-phospho-beta-D-ribosyl)imidazole-4-carboxamide. It participates in amino-acid biosynthesis; L-histidine biosynthesis; L-histidine from 5-phospho-alpha-D-ribose 1-diphosphate: step 4/9. The sequence is that of 1-(5-phosphoribosyl)-5-[(5-phosphoribosylamino)methylideneamino] imidazole-4-carboxamide isomerase from Geobacillus thermodenitrificans (strain NG80-2).